The following is a 172-amino-acid chain: Acidic proline-rich protein PRP25 (172 aa).

Residues 1–16 (MLVVLFTAVLLTLSYA) form the signal peptide. Positions 22 to 172 (ELQILDQTPN…QQGPPPPGGP (151 aa)) are disordered. Residues 32–44 (QKPPPPGFPPRPP) are compositionally biased toward pro residues. Residues 57–67 (GPQQSPLQPGK) show a composition bias toward low complexity. 2 stretches are compositionally biased toward pro residues: residues 68–137 (PQDP…PQQK) and 145–172 (QGPPPPGGPQQKPPQPGNQQGPPPPGGP).

It localises to the secreted. The protein is Acidic proline-rich protein PRP25 of Rattus norvegicus (Rat).